The sequence spans 1967 residues: MALTYRSPVEEVLTLFEPTAQSLIASAAVSAFQRHEKDNFEWFRYSVPAFAKEHLSKAGIYLSPYAGFPHSHPVCKTLENYILYVVVPSIVNSTFFFVGIKDFKINFLKSRFDKLNMISALNRYVSSADKIRYGNDFVIRAGVEHRALKRHRGLVDSPTLKALMPNVKSGSKLFLHDELHYWSKEELIGFLEICEPEVLLGTVIYPPELLIGSDCSLNPWCYEYEVKKKKLLFYPDGVRSEGYEQPLSGGYLLQTSRIKLPNAGIYCVDLLCSRFAHHLFSITRGDLITPDNRSFGPFEAVHSGALAGISRGKPNFYPVSQHTILRVYRYLRSLKKPDKQSAMAKFSQIVHEPCGRAVKFMEEFSDLIINTGTLRTVINPEQVKLFFGNLGRCMPPCFASKLKGTRTVCLDEFISMLRPLSVDVTLETISMHSMTMVVTTWSQEAEEGVDLPKIFEEKWEGKQSLDRTEAPYLGLAPFVDYKIQWRLQFNIPKFLNQLAELFVNSCSVNGGVRSMSIPAYLRRLATCRSCVGRAMLCCLTEVDIASLRVVVRNRYPYTEDFYRCRRRWFLRIGAQRRPSFYIEDAKHLERLGQFEEEQFQRPMSRRSLYTLASVSMNGTDDPFCSDCFYDPVPVARAKIVPTPTVIVERALEPLAIDTGTTSDAPCDAPGATCLRGAQAVVCACGLSMAVSAVPYAELKMDFYPDALKGRDAAWYSKEDREYKYNGGSHLCRGWPKWLQLWMQANGVDETYDCMLAQRYGAQGKIGFHADNEEIFMRGAPVHTVSMDGNADFGTECAAGRQYTTLRGNVQFTMPSGFQETHKHAVRNTTAGRVSYTFRRLAKKDESRVIEEVVEVETKDMGFSSSLFGVQIIVDEPCDGVEETFNVQCVPGDGNCFWHSLGSFTGLTVECMKAGIKNFACGPEGAEKLSRQLEPNVWAEDEALCAACAHLGVDLVIFDEDQGFKMLYRYPGNKREALLRLKGSHFEPLEPKEMCVVKAIAQAVKRSPMDVLRVALKKMGEDFKEQICRGKGVMLDVFMVLAKIFDVSACVLQGTEQIMINPKGRIKGLFRMTTDHLSYDGVPDKVKHSEVNVYKHDVALQIEDLIELRELSSLVEYTPSFSRAKLLADCLHDGSTGVMCSELYNDKGHLCPEGRETTRVTIGVLLGTFGCGKSRLFKEILFKLCGKSVCYISPRKALCDSFDDEIRKARGNMGERGIKHYKSLTFEKAILQASKLHKGSLVIIDEIQLYPPGYLDLLLLLAGPTMKYFALGDPCQSDYDSEKDRTILGSVRSDVFELLDGIEYKFNILSRRFQSSLFRGRLPCLMYEEDLEAGAPLRLIDGLESIDTSAAYSRCCLVSSFEEKKIVNAYFGERTKCLTFGESTGMTFDVGCVLITSISAHTSEQRWITALSRFRKDIVFVNAASVAWDTLQSVYANRWLGRFLNRSARQEDLRRMLPGTPLFVEGFQKNLLGADEGKRECKLEGDPWLKTMVDLLQVEDMEDIEIAKEVLQDEWCKTHLPQCELESVRARWVHKILAKEFREKRMGCLVSEQFTDQHSKQMGKHLTNSAERFETIYPRHRAADTVTFIMAVRKRLSFSCPIKESAKLNQALPYGPFLLKEFLKRVPLKPMHDRKMMEQAKFDFEEKKTSKSAATIENHSNRSCRDWLIDVGLVFSKSQLCTKFDNRFRDAKRAQTIVCFQHAVLCRFAPYMRYIEKKLNEVLPSKYYIHSGKGLEELNRWVIEGRFEGVCTESDYEAFDASQDHYIVAFEICLMRYLGLPNDLIEDYKFIKTHLGSKLGNFAIMRFSGEASTFLFNTMANMLFTFLQYDLKGNERICFAGDDMCANGRLHVSSKHKNFMSKLKLKAKVSNTMNPTFCGWNLSSDGIFKKPQLVLERLCIAKETNNLANCIDNYAIEVSFAYLMGERAKQRMDEEEVEAFYNCVRIIVKSKHLLKSDVATIYQTARVD.

Residues 63–252 (SPYAGFPHSH…YEQPLSGGYL (190 aa)) form the Alphavirus-like MT domain. A Fe2OG dioxygenase domain is found at 750 to 841 (TYDCMLAQRY…RVSYTFRRLA (92 aa)). Residues H768, D770, and H823 each coordinate Fe cation. R832 serves as a coordination point for 2-oxoglutarate. The OTU domain maps to 884–991 (FNVQCVPGDG…GSHFEPLEPK (108 aa)). In terms of domain architecture, Peptidase C23 spans 990 to 1080 (PKEMCVVKAI…MTTDHLSYDG (91 aa)). Residues C994 and H1075 contribute to the active site. Residues 1133–1308 (GSTGVMCSEL…DGIEYKFNIL (176 aa)) enclose the (+)RNA virus helicase ATP-binding domain. 1166-1173 (GTFGCGKS) contributes to the ATP binding site. The (+)RNA virus helicase C-terminal domain occupies 1309 to 1455 (SRRFQSSLFR…SARQEDLRRM (147 aa)). In terms of domain architecture, RdRp catalytic spans 1748–1855 (GVCTESDYEA…NGRLHVSSKH (108 aa)).

This sequence belongs to the potexviruses/carlaviruses RNA replication protein family. Fe(2+) is required as a cofactor. Post-translationally, specific enzymatic cleavages by the viral protease yield mature proteins.

It catalyses the reaction ATP + H2O = ADP + phosphate + H(+). The catalysed reaction is RNA(n) + a ribonucleoside 5'-triphosphate = RNA(n+1) + diphosphate. In terms of biological role, RNA-directed RNA polymerase involved in viral RNA replication. Its function is as follows. Protease: Thiol protease that cleaves the polyprotein. This Vaccinium corymbosum (Highbush blueberry) protein is RNA replication polyprotein.